A 196-amino-acid polypeptide reads, in one-letter code: Cell division protein SepF (196 aa).

Residues 16–81 are disordered; it reads EDDEEFNEPA…KRAGSTFTKP (66 aa). Over residues 56–69 the composition is skewed to polar residues; it reads RPAQSTSKAQTQTA.

This sequence belongs to the SepF family. As to quaternary structure, homodimer. Interacts with FtsZ.

Its subcellular location is the cytoplasm. In terms of biological role, cell division protein that is part of the divisome complex and is recruited early to the Z-ring. Probably stimulates Z-ring formation, perhaps through the cross-linking of FtsZ protofilaments. Its function overlaps with FtsA. The chain is Cell division protein SepF from Lactococcus lactis subsp. lactis (strain IL1403) (Streptococcus lactis).